The following is a 286-amino-acid chain: Putative chaperone BssE (286 aa).

Residues 47–54 (GKQGCGKS) and 108–115 (GCVIHLEE) each bind ATP.

The protein belongs to the CbbQ/NirQ/NorQ/GpvN family.

May have a role in assembly and/or activation of benzylsuccinate synthase. The sequence is that of Putative chaperone BssE (bssE) from Thauera aromatica.